The following is a 529-amino-acid chain: Peptide chain release factor 3 (529 aa).

Positions Ala11–Met280 constitute a tr-type G domain. GTP is bound by residues Ser20–Thr27, Asp88–His92, and Asn142–Asp145.

Belongs to the TRAFAC class translation factor GTPase superfamily. Classic translation factor GTPase family. PrfC subfamily.

It is found in the cytoplasm. Functionally, increases the formation of ribosomal termination complexes and stimulates activities of RF-1 and RF-2. It binds guanine nucleotides and has strong preference for UGA stop codons. It may interact directly with the ribosome. The stimulation of RF-1 and RF-2 is significantly reduced by GTP and GDP, but not by GMP. The chain is Peptide chain release factor 3 from Shigella boydii serotype 18 (strain CDC 3083-94 / BS512).